Reading from the N-terminus, the 204-residue chain is Transcriptional regulator GfcR (204 aa).

It belongs to the purine/pyrimidine phosphoribosyltransferase family. GfcR subfamily.

The sequence is that of Transcriptional regulator GfcR from Methanosarcina mazei (strain ATCC BAA-159 / DSM 3647 / Goe1 / Go1 / JCM 11833 / OCM 88) (Methanosarcina frisia).